Reading from the N-terminus, the 850-residue chain is Pro-neuregulin-2, membrane-bound isoform (850 aa).

The segment at 1–96 (MRQVCCSALP…AAAAGGMRRD (96 aa)) is disordered. A propeptide spanning residues 1–111 (MRQVCCSALP…SMLLFGVSLA (111 aa)) is cleaved from the precursor. A compositionally biased stretch (low complexity) spans 20–59 (SSYSDSSSSSSERSSSSSSSSSESGSSSRSSSNNSSISRP). 2 N-linked (GlcNAc...) asparagine glycosylation sites follow: N52 and N53. The span at 60 to 74 (AAPPEPRPQQQPQPR) shows a compositional bias: pro residues. The segment covering 75-92 (SPAARRAAARSRAAAAGG) has biased composition (low complexity). Topologically, residues 112–405 (CYSPSLKSVQ…QKAEELYQKR (294 aa)) are extracellular. N-linked (GlcNAc...) asparagine glycosylation is found at N147, N278, and N346. One can recognise an Ig-like C2-type domain in the interval 237-332 (PKLKKMKSQT…RGRLYVNSVS (96 aa)). 4 disulfide bridges follow: C257–C311, C345–C359, C353–C370, and C372–C381. The EGF-like domain occupies 341–382 (HARKCNETAKSYCVNGGVCYYIEGINQLSCKCPNGFFGQRCL). The chain crosses the membrane as a helical span at residues 406–426 (VLTITGICVALLVVGIVCVVA). Residues 427 to 850 (YCKTKKQRKQ…PRAKQDSAPL (424 aa)) lie on the Cytoplasmic side of the membrane. Disordered regions lie at residues 492-535 (TFSG…DSQS), 566-585 (EERRRATAPPYHDSVDSLRD), 647-681 (LLRHPAPPGPGPGPGPGPGPGADMQRSYDSYYYPA), 700-788 (LPAS…DGAL), and 801-850 (AHDA…SAPL). Low complexity predominate over residues 494–506 (SGSHSCSPSHHCS). Positions 514–527 (HRHESHTWSLERSE) are enriched in basic and acidic residues. Over residues 651–665 (PAPPGPGPGPGPGPG) the composition is skewed to pro residues. Low complexity predominate over residues 750–767 (GLAAQRARAARDSLSLSS).

This sequence belongs to the neuregulin family. As to quaternary structure, interacts with ERBB3 and ERBB4. Post-translationally, proteolytic cleavage close to the plasma membrane on the external face leads to the release of the soluble growth factor form. Extensive glycosylation precedes the proteolytic cleavage. In terms of tissue distribution, restricted to the cerebellum in the adult.

The protein localises to the cell membrane. It localises to the secreted. Functionally, direct ligand for ERBB3 and ERBB4 tyrosine kinase receptors. Concomitantly recruits ERBB1 and ERBB2 coreceptors, resulting in ligand-stimulated tyrosine phosphorylation and activation of the ERBB receptors. May also promote the heterodimerization with the EGF receptor. The polypeptide is Pro-neuregulin-2, membrane-bound isoform (NRG2) (Homo sapiens (Human)).